A 908-amino-acid chain; its full sequence is Hyphal wall protein 2 (908 aa).

An N-terminal signal peptide occupies residues 1 to 20 (MRFATTQLATLACFILTAEA). 3 stretches are compositionally biased toward low complexity: residues 110 to 187 (PKTA…TTSK), 266 to 324 (ESTT…TMKH), and 332 to 405 (HATT…KSST). 2 disordered regions span residues 110–221 (PKTA…PSKT) and 263–477 (TETE…IPKY). Over residues 406–416 (PASTLEYSTSI) the composition is skewed to polar residues. Over residues 422–477 (TTSNSLSTKSTTLTTISRSSTSGSSVPNTTRESSTSTTTPNSSSSESKVSSAIPKY) the composition is skewed to low complexity. Asn-449, Asn-462, and Asn-519 each carry an N-linked (GlcNAc...) asparagine glycan. Low complexity predominate over residues 539 to 608 (GTTVRSSTSE…TSTTTPESSP (70 aa)). The tract at residues 539-700 (GTTVRSSTSE…TSASETSSGS (162 aa)) is disordered. Residues 624–638 (TMESSASTTKNSSIQ) are compositionally biased toward polar residues. A glycan (N-linked (GlcNAc...) asparagine) is linked at Asn-634. 2 stretches are compositionally biased toward low complexity: residues 639–655 (STSE…ESSV) and 662–677 (SSVP…VVTT). A glycan (N-linked (GlcNAc...) asparagine) is linked at Asn-684. Over residues 685-700 (TTLEHSTSASETSSGS) the composition is skewed to low complexity. N-linked (GlcNAc...) asparagine glycosylation is present at Asn-764. The interval 821–844 (VSTDVKPTTSSQGTKSTPVDTDSK) is disordered. Gly-887 is lipidated: GPI-anchor amidated glycine. A propeptide spans 888-908 (TGNNMKLSFGVVIAGVAAFAI) (removed in mature form).

The GPI-anchor is attached to the protein in the endoplasmic reticulum and serves to target the protein to the cell surface. There, the glucosamine-inositol phospholipid moiety is cleaved off and the GPI-modified mannoprotein is covalently attached via its lipidless GPI glycan remnant to the 1,6-beta-glucan of the outer cell wall layer.

The protein resides in the secreted. Its subcellular location is the cell wall. It localises to the membrane. GPI-anchored cell wall protein required for mating efficiency, biofilm formation, adhesion, filamentous growth, and oxidative stress tolerance. Involved in normal disseminated infection in a mouse systemic candidiasis model. This Candida albicans (strain SC5314 / ATCC MYA-2876) (Yeast) protein is Hyphal wall protein 2 (HWP2).